A 594-amino-acid polypeptide reads, in one-letter code: MSSLVMHVGIVNKPAITYLPTLSRRASNLHNVSSTRLQTSCSLQLDYKPVDETRRSGNYQPSAWDFEYIQSLKNKYKEEKYLTRHTKLTVQVKMLLDEDMEAVQQLDFIEDLNNLGISYLFKDKITQILNHIYNEHRCFHNNEAEESDLYFTALGFRLLRQHGFKVSQEVFDCFKNEKYTNFKASLAGDTKGLLQLYEASFLLREGEDTLELARKFSTKLLQQKIDEGEPDNNLLSCIRHSLELPLHWRLQRLEARWFLDAYATRHDMNPIIFELAKLEFNITQATQQEELKDLSRWWNSTGLAEKLPFARDRIVESYFWAMGTFEPHQYGYQRELVSKIIALTTVVDDIYDVYGTLEELELFTDVIRRWETESIDELPYYIQLCYLAVNKFVFDLAHDVLKDKGFNSLPYLKRSWKDLIERYLIEAKWYHNRYTPSLEEYLNNARVTITCPTILSQIYFALASPIEKPVIEVMYKYHDILYLSGMLLRLPDDLGTAPFELKRGDVPKAVQCYMKERNVPEKEAREHVRFLIREASKQMNTAMAIDCPFTEDFAVAAANLGRVANLAYVEGDGFGVQHSNIYEHIGSLMFKPYA.

Residues methionine 1 to valine 50 constitute a chloroplast transit peptide. Positions 348, 352, 492, and 500 each coordinate Mg(2+). Residues aspartate 348–aspartate 352 carry the DDXXD motif motif.

It belongs to the terpene synthase family. Tpsa subfamily. It depends on Mg(2+) as a cofactor. Mn(2+) serves as cofactor. Expressed at low levels in leaves.

Its subcellular location is the plastid. It is found in the chloroplast. It carries out the reaction (2E)-geranyl diphosphate = alpha-pinene + diphosphate. The enzyme catalyses (2E)-geranyl diphosphate + H2O = (1S,2S,4R)-endo-fenchol + diphosphate. It catalyses the reaction (2E)-geranyl diphosphate = limonene + diphosphate. It participates in secondary metabolite biosynthesis; terpenoid biosynthesis. Monoterpene synthase involved in the biosynthesis of volatile compounds widely used in aromatherapy and folk medicine, and present in culinary herbs. Mediates the conversion of (2E)-geranyl diphosphate (GPP) into alpha fenchol, limonene and alpha-pinene and, as minor compounds, into beta-myrcene, alpha-terpinolene and alpha-phellandrene. The sequence is that of (-)-endo-fenchol synthase, chloroplastic from Lavandula stoechas (Butterfly lavender).